A 196-amino-acid polypeptide reads, in one-letter code: HTH-type transcriptional regulator BetI (196 aa).

Residues 8–68 form the HTH tetR-type domain; sequence PVRREQLIRA…AAMRQILREL (61 aa). Positions 31-50 form a DNA-binding region, H-T-H motif; it reads TVATIAKKAGLSSGIVAHYF.

Its pathway is amine and polyamine biosynthesis; betaine biosynthesis via choline pathway [regulation]. Repressor involved in the biosynthesis of the osmoprotectant glycine betaine. It represses transcription of the choline transporter BetT and the genes of BetAB involved in the synthesis of glycine betaine. In Stenotrophomonas maltophilia (strain R551-3), this protein is HTH-type transcriptional regulator BetI.